The sequence spans 308 residues: Acetaldehyde dehydrogenase (308 aa).

25–28 (TGAI) serves as a coordination point for NAD(+). The active-site Acyl-thioester intermediate is the Cys-139. Asn-279 contributes to the NAD(+) binding site.

It belongs to the acetaldehyde dehydrogenase family.

The catalysed reaction is acetaldehyde + NAD(+) + CoA = acetyl-CoA + NADH + H(+). The polypeptide is Acetaldehyde dehydrogenase (Streptomyces griseus subsp. griseus (strain JCM 4626 / CBS 651.72 / NBRC 13350 / KCC S-0626 / ISP 5235)).